Here is an 82-residue protein sequence, read N- to C-terminus: Cytochrome b-c1 complex subunit 8 (82 aa).

The Mitochondrial matrix portion of the chain corresponds to 1–43 (MGREFGNLARIRHVISYSLSPFEQRAFPSYFSKGIPNVLRRTR). Residue serine 16 is modified to Phosphoserine. At lysine 33 the chain carries N6-acetyllysine; alternate. Position 33 is an N6-succinyllysine; alternate (lysine 33). A helical transmembrane segment spans residues 44 to 62 (ERILRVAPPFVVVYLIYTW). Residues 63-82 (GNQEFEQSKRKNPAMYENDK) are Mitochondrial intermembrane-facing.

Belongs to the UQCRQ/QCR8 family. In terms of assembly, component of the ubiquinol-cytochrome c oxidoreductase (cytochrome b-c1 complex, complex III, CIII), a multisubunit enzyme composed of 11 subunits. The complex is composed of 3 respiratory subunits cytochrome b, cytochrome c1 and Rieske protein UQCRFS1, 2 core protein subunits UQCRC1/QCR1 and UQCRC2/QCR2, and 6 low-molecular weight protein subunits UQCRH/QCR6, UQCRB/QCR7, UQCRQ/QCR8, UQCR10/QCR9, UQCR11/QCR10 and subunit 9, the cleavage product of Rieske protein UQCRFS1. The complex exists as an obligatory dimer and forms supercomplexes (SCs) in the inner mitochondrial membrane with NADH-ubiquinone oxidoreductase (complex I, CI) and cytochrome c oxidase (complex IV, CIV), resulting in different assemblies (supercomplex SCI(1)III(2)IV(1) and megacomplex MCI(2)III(2)IV(2)). Interacts with UQCC6.

It localises to the mitochondrion inner membrane. Component of the ubiquinol-cytochrome c oxidoreductase, a multisubunit transmembrane complex that is part of the mitochondrial electron transport chain which drives oxidative phosphorylation. The respiratory chain contains 3 multisubunit complexes succinate dehydrogenase (complex II, CII), ubiquinol-cytochrome c oxidoreductase (cytochrome b-c1 complex, complex III, CIII) and cytochrome c oxidase (complex IV, CIV), that cooperate to transfer electrons derived from NADH and succinate to molecular oxygen, creating an electrochemical gradient over the inner membrane that drives transmembrane transport and the ATP synthase. The cytochrome b-c1 complex catalyzes electron transfer from ubiquinol to cytochrome c, linking this redox reaction to translocation of protons across the mitochondrial inner membrane, with protons being carried across the membrane as hydrogens on the quinol. In the process called Q cycle, 2 protons are consumed from the matrix, 4 protons are released into the intermembrane space and 2 electrons are passed to cytochrome c. The chain is Cytochrome b-c1 complex subunit 8 (Uqcrq) from Mus musculus (Mouse).